A 96-amino-acid polypeptide reads, in one-letter code: Uteroglobin (96 aa).

The signal sequence occupies residues 1–19 (MKIAITITVLMLSICCSSA).

It belongs to the secretoglobin family. As to quaternary structure, antiparallel homodimer; disulfide-linked. Interaction with LMBR1L is controversial. As to expression, club cells (nonciliated cells of the surface epithelium of the pulmonary airways).

It localises to the secreted. Functionally, binds phosphatidylcholine, phosphatidylinositol, polychlorinated biphenyls (PCB) and weakly progesterone, potent inhibitor of phospholipase A2. The sequence is that of Uteroglobin (Scgb1a1) from Rattus norvegicus (Rat).